The sequence spans 138 residues: Small ribosomal subunit protein uS9 (138 aa).

The span at 100 to 118 shows a compositional bias: basic and acidic residues; sequence PENRPPLKTEGYLTRDPRA. The interval 100–138 is disordered; sequence PENRPPLKTEGYLTRDPRAKERKKYGLHKARKAPQYSKR. Basic residues predominate over residues 119 to 138; that stretch reads KERKKYGLHKARKAPQYSKR.

The protein belongs to the universal ribosomal protein uS9 family.

The sequence is that of Small ribosomal subunit protein uS9 from Trichormus variabilis (strain ATCC 29413 / PCC 7937) (Anabaena variabilis).